The sequence spans 73 residues: MLILSRKTNQKIFIGDSIELTIIEIRGDQVKVGVEAPRSVKIFRQEVYEEIQRENRAASDSPWSPNSLPQLPV.

The disordered stretch occupies residues 54-73; the sequence is ENRAASDSPWSPNSLPQLPV. Over residues 61–73 the composition is skewed to polar residues; the sequence is SPWSPNSLPQLPV.

This sequence belongs to the CsrA/RsmA family. As to quaternary structure, homodimer; the beta-strands of each monomer intercalate to form a hydrophobic core, while the alpha-helices form wings that extend away from the core.

The protein resides in the cytoplasm. Functionally, a translational regulator that binds mRNA to regulate translation initiation and/or mRNA stability. Usually binds in the 5'-UTR at or near the Shine-Dalgarno sequence preventing ribosome-binding, thus repressing translation. Its main target seems to be the major flagellin gene, while its function is anatagonized by FliW. In Treponema pallidum (strain Nichols), this protein is Translational regulator CsrA.